The sequence spans 917 residues: ABC transporter A family member 12 (917 aa).

6 consecutive transmembrane segments (helical) span residues 34 to 54 (LILV…VLDA), 323 to 343 (IASL…FPVI), 377 to 397 (FLTI…AIGL), 409 to 429 (FVFY…VSSI), 435 to 455 (TVTV…SFLF), and 508 to 528 (GEVF…AYYI). In terms of domain architecture, ABC transporter spans 595–832 (ILCDNLKKVY…YGGSYVFTMT (238 aa)). Residue 633-640 (GPNGAGKT) coordinates ATP.

The protein belongs to the ABC transporter superfamily. ABCA family. CPR flippase (TC 3.A.1.211) subfamily.

It localises to the membrane. In Arabidopsis thaliana (Mouse-ear cress), this protein is ABC transporter A family member 12 (ABCA12).